The chain runs to 1022 residues: ATPase MORC2B (1022 aa).

A2 is modified (N-acetylalanine). ATP-binding positions include N39, S87 to K89, and R99 to K105. N39 provides a ligand contact to Mg(2+). Residues K285 to E362 are a coiled coil. K427 contributes to the ATP binding site. A CW-type zinc finger spans residues A490 to K544. Zn(2+)-binding residues include C499, C502, C525, and C536. A coiled-coil region spans residues K555–P583. S615 is modified (phosphoserine). K649 is covalently cross-linked (Glycyl lysine isopeptide (Lys-Gly) (interchain with G-Cter in SUMO2)). A phosphoserine mark is found at S690, S724, S733, and S737. K758 participates in a covalent cross-link: Glycyl lysine isopeptide (Lys-Gly) (interchain with G-Cter in SUMO2). Phosphoserine is present on residues S768 and S770. T827 is modified (phosphothreonine). A phosphoserine mark is found at S846 and S851. K922 participates in a covalent cross-link: Glycyl lysine isopeptide (Lys-Gly) (interchain with G-Cter in SUMO2). Residues Q962–G1001 adopt a coiled-coil conformation.

As to quaternary structure, interacts with Morc2a. In terms of tissue distribution, protein is abundant in testes but not detected in other adult tissues examined (at protein level). Detected in germ cells with a distinct developmental-specific expression pattern but not in somatic cells such as Sertoli cells.

Its subcellular location is the nucleus. It catalyses the reaction ATP + H2O = ADP + phosphate + H(+). Required for chromosomal synapsis and meiotic recombination in males and females. The polypeptide is ATPase MORC2B (Mus musculus (Mouse)).